Consider the following 68-residue polypeptide: Protein SlyX homolog (68 aa).

It belongs to the SlyX family.

The sequence is that of Protein SlyX homolog from Pseudomonas fluorescens (strain Pf0-1).